The primary structure comprises 21 residues: Ocellatin-4 (21 aa).

Ile21 carries the isoleucine amide modification.

In terms of tissue distribution, expressed by the skin dorsal glands.

It localises to the secreted. In terms of biological role, has hemolytic activity against human erythrocytes (HC50=14.3 uM). Has antibacterial activity against the Gram-positive bacterium S.aureus ATCC 25923 (MIC=64 uM) and the Gram-negative bacterium E.coli ATCC 25922 (MIC=64 uM). This is Ocellatin-4 from Leptodactylus ocellatus (Argus frog).